A 282-amino-acid chain; its full sequence is Phosphate import ATP-binding protein PstB (282 aa).

The region spanning 36–277 (IEVKNLNFFY…PARKETEDYI (242 aa)) is the ABC transporter domain. Position 68–75 (68–75 (GPSGCGKS)) interacts with ATP.

It belongs to the ABC transporter superfamily. Phosphate importer (TC 3.A.1.7) family. The complex is composed of two ATP-binding proteins (PstB), two transmembrane proteins (PstC and PstA) and a solute-binding protein (PstS).

The protein localises to the cell inner membrane. The enzyme catalyses phosphate(out) + ATP + H2O = ADP + 2 phosphate(in) + H(+). Part of the ABC transporter complex PstSACB involved in phosphate import. Responsible for energy coupling to the transport system. In Burkholderia pseudomallei (strain 1710b), this protein is Phosphate import ATP-binding protein PstB.